The following is a 255-amino-acid chain: MLTIADHEFSSRLFTGTGKFARPDLMAAAVEASGSRLVTMAIKRLEPGKRHDDILTPLLALGVKLLPNTSGAKTAAEAVFAAHLAREALGTNWLKLEIHPDPKYLLPDPIETLKAAEQLVKEGFVVLPYCGADPVLCKRLEEVGCAAVMPLGAPIGSNQGLVTRDFLAIIIEQARVPVVVDAGIGAPSHAAAAFELGADAVLVNTAIAVSRDPVAMGRAFALACEAGRSAYLAGLGARGLQASASSPLTDFLEAL.

The Schiff-base intermediate with DXP role is filled by Lys-95. 1-deoxy-D-xylulose 5-phosphate contacts are provided by residues Gly-156, Ala-182–Gly-183, and Asn-204–Thr-205.

This sequence belongs to the ThiG family. In terms of assembly, homotetramer. Forms heterodimers with either ThiH or ThiS.

It localises to the cytoplasm. It catalyses the reaction [ThiS sulfur-carrier protein]-C-terminal-Gly-aminoethanethioate + 2-iminoacetate + 1-deoxy-D-xylulose 5-phosphate = [ThiS sulfur-carrier protein]-C-terminal Gly-Gly + 2-[(2R,5Z)-2-carboxy-4-methylthiazol-5(2H)-ylidene]ethyl phosphate + 2 H2O + H(+). It functions in the pathway cofactor biosynthesis; thiamine diphosphate biosynthesis. In terms of biological role, catalyzes the rearrangement of 1-deoxy-D-xylulose 5-phosphate (DXP) to produce the thiazole phosphate moiety of thiamine. Sulfur is provided by the thiocarboxylate moiety of the carrier protein ThiS. In vitro, sulfur can be provided by H(2)S. This is Thiazole synthase from Aeromonas salmonicida (strain A449).